We begin with the raw amino-acid sequence, 30 residues long: Ornithine carbamoyltransferase (30 aa).

Belongs to the aspartate/ornithine carbamoyltransferase superfamily. OTCase family.

Its subcellular location is the cytoplasm. The catalysed reaction is carbamoyl phosphate + L-ornithine = L-citrulline + phosphate + H(+). Its pathway is amino-acid biosynthesis; L-arginine biosynthesis; L-arginine from L-ornithine and carbamoyl phosphate: step 1/3. In terms of biological role, has vitronectin and fibronectin-binding activity. The sequence is that of Ornithine carbamoyltransferase (argF) from Staphylococcus epidermidis.